Here is a 178-residue protein sequence, read N- to C-terminus: FXYD domain-containing ion transport regulator 5 (178 aa).

Positions 1–21 (MSPPSQLCLLTIVALILPSEG) are cleaved as a signal peptide. The tract at residues 21–126 (GQTPEKPRSS…YMPPSYIENP (106 aa)) is disordered. Topologically, residues 22-146 (QTPEKPRSSF…YDNTTLRKRG (125 aa)) are extracellular. Over residues 29 to 58 (SSFTAHQSSVTTHVPVPDQTSPGVQTTPPI) the composition is skewed to polar residues. Over residues 70–79 (QTAAKTKTQQ) the composition is skewed to low complexity. Residues 147–164 (LLVAAVLFITGIIILTSG) form a helical membrane-spanning segment. At 165 to 178 (KCRQFSQLCLNRHR) the chain is on the cytoplasmic side.

Belongs to the FXYD family. Regulatory subunit of the sodium/potassium-transporting ATPase which is composed of a catalytic alpha subunit, a non-catalytic beta subunit and an additional regulatory subunit. The regulatory subunit, a member of the FXYD protein family, modulates the enzymatic activity in a tissue- and isoform-specific way by changing affinities of the Na+/K+-ATPase toward Na(+), K(+) or ATP. Glycosylated. In terms of tissue distribution, spleen, lung, skeletal muscle, and testis.

It is found in the cell membrane. Its subcellular location is the basolateral cell membrane. Associates with and regulates the activity of the sodium/potassium-transporting ATPase (NKA) which catalyzes the hydrolysis of ATP coupled with the exchange of Na(+) and K(+) ions across the plasma membrane. May increase NKA activity by increasing the apparent affinity for Na(+). Involved in down-regulation of E-cadherin which results in reduced cell adhesion. Promotes metastasis. This is FXYD domain-containing ion transport regulator 5 (Fxyd5) from Rattus norvegicus (Rat).